We begin with the raw amino-acid sequence, 98 residues long: NADH-ubiquinone oxidoreductase chain 4L (98 aa).

The next 3 membrane-spanning stretches (helical) occupy residues 1 to 21 (MSMV…GMLV), 29 to 49 (SLLC…VTIL), and 61 to 81 (IILL…LVMV).

This sequence belongs to the complex I subunit 4L family. As to quaternary structure, core subunit of respiratory chain NADH dehydrogenase (Complex I) which is composed of 45 different subunits.

The protein resides in the mitochondrion inner membrane. The enzyme catalyses a ubiquinone + NADH + 5 H(+)(in) = a ubiquinol + NAD(+) + 4 H(+)(out). Core subunit of the mitochondrial membrane respiratory chain NADH dehydrogenase (Complex I) which catalyzes electron transfer from NADH through the respiratory chain, using ubiquinone as an electron acceptor. Part of the enzyme membrane arm which is embedded in the lipid bilayer and involved in proton translocation. This chain is NADH-ubiquinone oxidoreductase chain 4L (MT-ND4L), found in Odobenus rosmarus rosmarus (Atlantic walrus).